We begin with the raw amino-acid sequence, 155 residues long: Protein-export protein SecB (155 aa).

This sequence belongs to the SecB family. As to quaternary structure, homotetramer, a dimer of dimers. One homotetramer interacts with 1 SecA dimer.

It is found in the cytoplasm. Its function is as follows. One of the proteins required for the normal export of preproteins out of the cell cytoplasm. It is a molecular chaperone that binds to a subset of precursor proteins, maintaining them in a translocation-competent state. It also specifically binds to its receptor SecA. In Escherichia coli O127:H6 (strain E2348/69 / EPEC), this protein is Protein-export protein SecB.